Reading from the N-terminus, the 373-residue chain is Chaperone protein DnaJ (373 aa).

The J domain occupies Asp-5 to Gly-69. A CR-type zinc finger spans residues Gly-130–Thr-212. Zn(2+) contacts are provided by Cys-143, Cys-146, Cys-160, Cys-163, Cys-186, Cys-189, Cys-200, and Cys-203. 4 CXXCXGXG motif repeats span residues Cys-143–Gly-150, Cys-160–Gly-167, Cys-186–Gly-193, and Cys-200–Gly-207.

This sequence belongs to the DnaJ family. As to quaternary structure, homodimer. Zn(2+) is required as a cofactor.

It is found in the cytoplasm. In terms of biological role, participates actively in the response to hyperosmotic and heat shock by preventing the aggregation of stress-denatured proteins and by disaggregating proteins, also in an autonomous, DnaK-independent fashion. Unfolded proteins bind initially to DnaJ; upon interaction with the DnaJ-bound protein, DnaK hydrolyzes its bound ATP, resulting in the formation of a stable complex. GrpE releases ADP from DnaK; ATP binding to DnaK triggers the release of the substrate protein, thus completing the reaction cycle. Several rounds of ATP-dependent interactions between DnaJ, DnaK and GrpE are required for fully efficient folding. Also involved, together with DnaK and GrpE, in the DNA replication of plasmids through activation of initiation proteins. This is Chaperone protein DnaJ from Staphylococcus epidermidis (strain ATCC 12228 / FDA PCI 1200).